The sequence spans 493 residues: Adenylyltransferase and sulfurtransferase uba4 (493 aa).

ATP is bound by residues G99, D120, 127 to 131, K144, and 188 to 189; these read SNLHR and DN. Residues C237 and C240 each coordinate Zn(2+). C254 serves as the catalytic Glycyl thioester intermediate; for adenylyltransferase activity. C316 and C319 together coordinate Zn(2+). The Rhodanese domain occupies 376–491; that stretch reads INKEPTIIDV…WREQIDPDWP (116 aa). C446 acts as the Cysteine persulfide intermediate; for sulfurtransferase activity in catalysis.

It in the N-terminal section; belongs to the HesA/MoeB/ThiF family. UBA4 subfamily. Zn(2+) serves as cofactor.

The protein localises to the cytoplasm. It localises to the cytosol. The enzyme catalyses [molybdopterin-synthase sulfur-carrier protein]-C-terminal Gly-Gly + ATP + H(+) = [molybdopterin-synthase sulfur-carrier protein]-C-terminal Gly-Gly-AMP + diphosphate. It catalyses the reaction [molybdopterin-synthase sulfur-carrier protein]-C-terminal Gly-Gly-AMP + S-sulfanyl-L-cysteinyl-[cysteine desulfurase] + AH2 = [molybdopterin-synthase sulfur-carrier protein]-C-terminal-Gly-aminoethanethioate + L-cysteinyl-[cysteine desulfurase] + A + AMP + 2 H(+). The protein operates within tRNA modification; 5-methoxycarbonylmethyl-2-thiouridine-tRNA biosynthesis. Its pathway is cofactor biosynthesis; molybdopterin biosynthesis. Functionally, plays a central role in 2-thiolation of mcm(5)S(2)U at tRNA wobble positions of cytosolic tRNA(Lys), tRNA(Glu) and tRNA(Gln). Also essential during biosynthesis of the molybdenum cofactor. Acts by mediating the C-terminal thiocarboxylation of sulfur carriers urm1 and mocs2a. Its N-terminus first activates urm1 and mocs2a as acyl-adenylates (-COAMP), then the persulfide sulfur on the catalytic cysteine is transferred to urm1 and mocs2a to form thiocarboxylation (-COSH) of their C-terminus. The reaction probably involves hydrogen sulfide that is generated from the persulfide intermediate and that acts as a nucleophile towards urm1 and mocs2a. Subsequently, a transient disulfide bond is formed. Does not use thiosulfate as sulfur donor; nfs1 probably acting as a sulfur donor for thiocarboxylation reactions. The protein is Adenylyltransferase and sulfurtransferase uba4 of Aspergillus fumigatus (strain CBS 144.89 / FGSC A1163 / CEA10) (Neosartorya fumigata).